The following is a 174-amino-acid chain: Chorismate pyruvate-lyase (174 aa).

Substrate is bound by residues Met-36, Arg-78, Leu-116, and Glu-157.

The protein belongs to the UbiC family. As to quaternary structure, monomer.

The protein resides in the cytoplasm. It carries out the reaction chorismate = 4-hydroxybenzoate + pyruvate. The protein operates within cofactor biosynthesis; ubiquinone biosynthesis. Its function is as follows. Removes the pyruvyl group from chorismate, with concomitant aromatization of the ring, to provide 4-hydroxybenzoate (4HB) for the ubiquinone pathway. This is Chorismate pyruvate-lyase from Yersinia pestis bv. Antiqua (strain Angola).